Reading from the N-terminus, the 159-residue chain is Eukaryotic translation initiation factor 5A-3 (159 aa).

Residues 1 to 12 (MSDEEHQFESKA) show a composition bias toward basic and acidic residues. Positions 1–21 (MSDEEHQFESKADAGASKTYP) are disordered. Lys-52 is modified (hypusine).

It belongs to the eIF-5A family. Post-translationally, lys-52 undergoes hypusination, a unique post-translational modification that consists in the addition of a butylamino group from spermidine to lysine side chain, leading to the formation of the unusual amino acid hypusine. eIF-5As are the only known proteins to undergo this modification, which is essential for their function.

Its function is as follows. Translation factor that promotes translation elongation and termination, particularly upon ribosome stalling at specific amino acid sequence contexts. Binds between the exit (E) and peptidyl (P) site of the ribosome and promotes rescue of stalled ribosome: specifically required for efficient translation of polyproline-containing peptides as well as other motifs that stall the ribosome. Acts as a ribosome quality control (RQC) cofactor by joining the RQC complex to facilitate peptidyl transfer during CAT tailing step. This Solanum lycopersicum (Tomato) protein is Eukaryotic translation initiation factor 5A-3.